The chain runs to 499 residues: Potassium voltage-gated channel subfamily A member 2 (499 aa).

The disordered stretch occupies residues 1-26; that stretch reads MTVATGDPVDEAAALPGHPQDTYDPE. Residues 1–125 form a tetramerization domain region; it reads MTVATGDPVD…YELGEEAMEM (125 aa). Residues 1-160 lie on the Cytoplasmic side of the membrane; the sequence is MTVATGDPVD…LLFEYPESSG (160 aa). Residues 161-182 form a helical membrane-spanning segment; sequence PARIIAIVSVMVILISIVSFCL. The Extracellular segment spans residues 183–221; it reads ETLPIFRDENEDMHGGGVTFHTYSNSTIGYQQSTSFTDP. The N-linked (GlcNAc...) asparagine glycan is linked to Asn207. Residues 222 to 243 traverse the membrane as a helical segment; it reads FFIVETLCIIWFSFEFLVRFFA. Cys244 carries S-palmitoyl cysteine lipidation. Residues 244–254 are Cytoplasmic-facing; that stretch reads CPSKAGFFTNI. Residues 255–275 form a helical membrane-spanning segment; the sequence is MNIIDIVAIIPYFITLGTELA. Over 276 to 289 the chain is Extracellular; the sequence is EKPEDAQQGQQAMS. Residues 290–310 traverse the membrane as a helical; Voltage-sensor segment; the sequence is LAILRVIRLVRVFRIFKLSRH. Residues 311 to 325 are Cytoplasmic-facing; sequence SKGLQILGQTLKASM. The segment at 312–325 is S4-S5 linker; the sequence is KGLQILGQTLKASM. Residues 326 to 347 traverse the membrane as a helical segment; sequence RELGLLIFFLFIGVILFSSAVY. Over 348–361 the chain is Extracellular; it reads FAEADERDSQFPSI. Positions 362-373 form an intramembrane region, helical; the sequence is PDAFWWAVVSMT. Residues 374-379 carry the Selectivity filter motif; that stretch reads TVGYGD. An intramembrane segment occupies 374-381; the sequence is TVGYGDMV. Residues 382–388 are Extracellular-facing; that stretch reads PTTIGGK. A helical membrane pass occupies residues 389-417; it reads IVGSLCAIAGVLTIALPVPVIVSNFNYFY. Over 418–499 the chain is Cytoplasmic; sequence HRETEGEEQA…VNITKMLTDV (82 aa). The residue at position 429 (Tyr429) is a Phosphotyrosine. Ser434, Ser440, Ser441, and Ser449 each carry phosphoserine. Phosphotyrosine is present on Tyr458. Ser468 is subject to Phosphoserine. The PDZ-binding motif lies at 497–499; it reads TDV.

This sequence belongs to the potassium channel family. A (Shaker) (TC 1.A.1.2) subfamily. Kv1.2/KCNA2 sub-subfamily. As to quaternary structure, homotetramer and heterotetramer with other channel-forming alpha subunits, such as KCNA1, KCNA4, KCNA5, KCNA6 and KCNA7. Channel activity is regulated by interaction with beta subunits, including KCNAB1 and KCNAB2. Identified in a complex with KCNA1 and KCNAB2. Identified in a complex with KCNA5 and KCNAB1. Identified in a complex with KCNA4 and FYN. Interacts with PTK2B. Interacts (via C-terminus) with CTTN. Interacts with ADAM22. Interacts with CNTNAP2. Interacts (via C-terminus) with the PDZ domains of DLG1, DLG2 and DLG4. Interacts (via N-terminal cytoplasmic domain) with RHOA (GTP-bound form); this regulates channel activity by reducing location at the cell surface in response to CHRM1 activation. Interacts with DRD2. Interacts with SIGMAR1; cocaine consumption leads to increased interaction. Interacts with ADAM11. Interacts with LYNX1. Post-translationally, phosphorylated on tyrosine residues; phosphorylation increases in response to ischemia. Phosphorylated on tyrosine residues by activated PTK2B/PYK2. Phosphorylation on tyrosine residues suppresses ion channel activity. Phosphorylated on tyrosine residues in response to CHRM1 activation; this abolishes interaction with CTTN. This is probably due to endocytosis of the phosphorylated channel subunits. Phosphorylated on serine residues in response to increased cAMP levels; phosphorylation is apparently not catalyzed by PKA. In terms of processing, N-glycosylated, with complex, sialylated N-glycans. As to expression, detected in brain. Detected in cerebellum. Detected in mitral cells in the olfactory bulb. Detected in cochlea. Detected in cerebellum, particularly in the basket cell axon plexus and in the terminal regions around Purkinje cells (at protein level). Detected in juxtaparanodal regions in sciatic nerve. Detected in Schwann cells from sciatic nerve. Detected in dopamine neurons in substantia nigra. Detected in large myelinated fibers in juxtaparanodes in the CA3 and CA1 areas of the hippocampus. Detected in brain, in punctae on fiber tracts in brain stem and spinal cord, and on axons in the juxtaparanodal regions of the node of Ranvier (at protein level). Detected in dopamine neurons in the midbrain.

The protein resides in the cell membrane. Its subcellular location is the membrane. It localises to the cell projection. The protein localises to the axon. It is found in the synapse. The protein resides in the endoplasmic reticulum membrane. Its subcellular location is the lamellipodium membrane. It localises to the synaptosome. The protein localises to the presynaptic cell membrane. It is found in the dendrite. The protein resides in the perikaryon. Its subcellular location is the cell junction. It localises to the paranodal septate junction. The catalysed reaction is K(+)(in) = K(+)(out). With respect to regulation, inhibited by 4-aminopyridine (4-AP), dendrotoxin (DTX) and charybdotoxin (CTX), but not by tetraethylammonium (TEA). Inhibited by tityustoxin-K alpha (TsTX-Kalpha), a toxin that is highly specific for KCNA2. Inhibited by maurotoxin. Inhibited by kappaM conotoxins kappaM-RIIIJ and kappaM-RIIIK. Functionally, voltage-gated potassium channel that mediates transmembrane potassium transport in excitable membranes, primarily in the brain and the central nervous system, but also in the cardiovascular system. Prevents aberrant action potential firing and regulates neuronal output. Forms tetrameric potassium-selective channels through which potassium ions pass in accordance with their electrochemical gradient. The channel alternates between opened and closed conformations in response to the voltage difference across the membrane. Can form functional homotetrameric channels and heterotetrameric channels that contain variable proportions of KCNA1, KCNA2, KCNA4, KCNA5, KCNA6, KCNA7, and possibly other family members as well; channel properties depend on the type of alpha subunits that are part of the channel. Channel properties are modulated by cytoplasmic beta subunits that regulate the subcellular location of the alpha subunits and promote rapid inactivation of delayed rectifier potassium channels. In vivo, membranes probably contain a mixture of heteromeric potassium channel complexes, making it difficult to assign currents observed in intact tissues to any particular potassium channel family member. Homotetrameric KCNA2 forms a delayed-rectifier potassium channel that opens in response to membrane depolarization, followed by slow spontaneous channel closure. In contrast, a heteromultimer formed by KCNA2 and KCNA4 shows rapid inactivation. Contributes to the regulation of action potentials in neurons. KCNA2-containing channels play a presynaptic role and prevent hyperexcitability and aberrant action potential firing. Response to toxins that are selective for KCNA1, respectively for KCNA2, suggests that heteromeric potassium channels composed of both KCNA1 and KCNA2 play a role in pacemaking and regulate the output of deep cerebellar nuclear neurons. Response to toxins that are selective for KCNA2-containing potassium channels suggests that in Purkinje cells, dendritic subthreshold KCNA2-containing potassium channels prevent random spontaneous calcium spikes, suppressing dendritic hyperexcitability without hindering the generation of somatic action potentials, and thereby play an important role in motor coordination. KCNA2-containing channels play a role in GABAergic transmission from basket cells to Purkinje cells in the cerebellum, and thereby play an import role in motor coordination. Plays a role in the induction of long-term potentiation of neuron excitability in the CA3 layer of the hippocampus. May function as down-stream effector for G protein-coupled receptors and inhibit GABAergic inputs to basolateral amygdala neurons. May contribute to the regulation of neurotransmitter release, such as gamma-aminobutyric acid (GABA). Contributes to the regulation of the axonal release of the neurotransmitter dopamine. Reduced KCNA2 expression plays a role in the perception of neuropathic pain after peripheral nerve injury, but not acute pain. Plays a role in the regulation of the time spent in non-rapid eye movement (NREM) sleep. The polypeptide is Potassium voltage-gated channel subfamily A member 2 (Kcna2) (Mus musculus (Mouse)).